We begin with the raw amino-acid sequence, 447 residues long: Ribosomal protein uS12 methylthiotransferase RimO (447 aa).

In terms of domain architecture, MTTase N-terminal spans 6–122; it reads EKVSMVSLGC…IAEIIEEKSS (117 aa). [4Fe-4S] cluster is bound by residues Cys-15, Cys-51, Cys-85, Cys-160, Cys-164, and Cys-167. Positions 146 to 376 constitute a Radical SAM core domain; sequence SSPAYTAYLK…MKAQARVSFK (231 aa). The 69-residue stretch at 379 to 447 folds into the TRAM domain; the sequence is RRLIDTEEQV…DYDLIGEIIS (69 aa).

The protein belongs to the methylthiotransferase family. RimO subfamily. [4Fe-4S] cluster serves as cofactor.

It localises to the cytoplasm. The catalysed reaction is L-aspartate(89)-[ribosomal protein uS12]-hydrogen + (sulfur carrier)-SH + AH2 + 2 S-adenosyl-L-methionine = 3-methylsulfanyl-L-aspartate(89)-[ribosomal protein uS12]-hydrogen + (sulfur carrier)-H + 5'-deoxyadenosine + L-methionine + A + S-adenosyl-L-homocysteine + 2 H(+). Its function is as follows. Catalyzes the methylthiolation of an aspartic acid residue of ribosomal protein uS12. In Geobacter sulfurreducens (strain ATCC 51573 / DSM 12127 / PCA), this protein is Ribosomal protein uS12 methylthiotransferase RimO.